A 261-amino-acid polypeptide reads, in one-letter code: Cytochrome c oxidase subunit 3 (261 aa).

The Mitochondrial matrix portion of the chain corresponds to 1–15 (MAHQAHAYHMVDPSP). The chain crosses the membrane as a helical span at residues 16–34 (WPLTGAVAALLMTSGLAVW). Residues 35 to 40 (FHFHSM) lie on the Mitochondrial intermembrane side of the membrane. The helical transmembrane segment at 41 to 66 (YLLYLGLTLLLLTMVQWWRDIIREGT) threads the bilayer. The Mitochondrial matrix portion of the chain corresponds to 67–72 (FQGHHT). Residues 73–105 (PPVQKGLRYGMILFITSEVFFFLGFFWAFYHSS) form a helical membrane-spanning segment. The Mitochondrial intermembrane portion of the chain corresponds to 106 to 128 (LAPTPELGGCWPPTGIYPLDPFE). The helical transmembrane segment at 129 to 152 (VPLLNTAVLLASGVTVTWAHHSLM) threads the bilayer. Residues 153–155 (EGN) are Mitochondrial matrix-facing. A helical membrane pass occupies residues 156 to 183 (RKEAIQALTLTVLLGFYFTALQAMEYYE). Topologically, residues 184–190 (APFTIAD) are mitochondrial intermembrane. The chain crosses the membrane as a helical span at residues 191–223 (GVYGSTFFVATGFHGLHVIIGSTFLMVCLLRQI). The Mitochondrial matrix portion of the chain corresponds to 224-232 (QYHFTSEHH). Residues 233–256 (FGFERAAWYWHFVDVVWLFLYVSI) form a helical membrane-spanning segment. The Mitochondrial intermembrane segment spans residues 257–261 (YWWGS).

This sequence belongs to the cytochrome c oxidase subunit 3 family. As to quaternary structure, component of the cytochrome c oxidase (complex IV, CIV), a multisubunit enzyme composed of 14 subunits. The complex is composed of a catalytic core of 3 subunits MT-CO1, MT-CO2 and MT-CO3, encoded in the mitochondrial DNA, and 11 supernumerary subunits COX4I, COX5A, COX5B, COX6A, COX6B, COX6C, COX7A, COX7B, COX7C, COX8 and NDUFA4, which are encoded in the nuclear genome. The complex exists as a monomer or a dimer and forms supercomplexes (SCs) in the inner mitochondrial membrane with NADH-ubiquinone oxidoreductase (complex I, CI) and ubiquinol-cytochrome c oxidoreductase (cytochrome b-c1 complex, complex III, CIII), resulting in different assemblies (supercomplex SCI(1)III(2)IV(1) and megacomplex MCI(2)III(2)IV(2)).

It localises to the mitochondrion inner membrane. The enzyme catalyses 4 Fe(II)-[cytochrome c] + O2 + 8 H(+)(in) = 4 Fe(III)-[cytochrome c] + 2 H2O + 4 H(+)(out). Its function is as follows. Component of the cytochrome c oxidase, the last enzyme in the mitochondrial electron transport chain which drives oxidative phosphorylation. The respiratory chain contains 3 multisubunit complexes succinate dehydrogenase (complex II, CII), ubiquinol-cytochrome c oxidoreductase (cytochrome b-c1 complex, complex III, CIII) and cytochrome c oxidase (complex IV, CIV), that cooperate to transfer electrons derived from NADH and succinate to molecular oxygen, creating an electrochemical gradient over the inner membrane that drives transmembrane transport and the ATP synthase. Cytochrome c oxidase is the component of the respiratory chain that catalyzes the reduction of oxygen to water. Electrons originating from reduced cytochrome c in the intermembrane space (IMS) are transferred via the dinuclear copper A center (CU(A)) of subunit 2 and heme A of subunit 1 to the active site in subunit 1, a binuclear center (BNC) formed by heme A3 and copper B (CU(B)). The BNC reduces molecular oxygen to 2 water molecules using 4 electrons from cytochrome c in the IMS and 4 protons from the mitochondrial matrix. The protein is Cytochrome c oxidase subunit 3 (MT-CO3) of Squalus acanthias (Spiny dogfish).